A 283-amino-acid chain; its full sequence is Bifunctional protein FolD (283 aa).

NADP(+) contacts are provided by residues 164 to 166 (GRS), Ser189, and Ile230.

It belongs to the tetrahydrofolate dehydrogenase/cyclohydrolase family. As to quaternary structure, homodimer.

The enzyme catalyses (6R)-5,10-methylene-5,6,7,8-tetrahydrofolate + NADP(+) = (6R)-5,10-methenyltetrahydrofolate + NADPH. It carries out the reaction (6R)-5,10-methenyltetrahydrofolate + H2O = (6R)-10-formyltetrahydrofolate + H(+). It participates in one-carbon metabolism; tetrahydrofolate interconversion. Its function is as follows. Catalyzes the oxidation of 5,10-methylenetetrahydrofolate to 5,10-methenyltetrahydrofolate and then the hydrolysis of 5,10-methenyltetrahydrofolate to 10-formyltetrahydrofolate. In Lacticaseibacillus casei (strain BL23) (Lactobacillus casei), this protein is Bifunctional protein FolD.